A 438-amino-acid polypeptide reads, in one-letter code: Trigger factor (438 aa).

The 86-residue stretch at 170-255 (GDTVVIDFDG…IHELKKLETP (86 aa)) folds into the PPIase FKBP-type domain.

The protein belongs to the FKBP-type PPIase family. Tig subfamily.

Its subcellular location is the cytoplasm. The catalysed reaction is [protein]-peptidylproline (omega=180) = [protein]-peptidylproline (omega=0). In terms of biological role, involved in protein export. Acts as a chaperone by maintaining the newly synthesized protein in an open conformation. Functions as a peptidyl-prolyl cis-trans isomerase. In Oenococcus oeni (Leuconostoc oenos), this protein is Trigger factor (tig).